The primary structure comprises 148 residues: 3-dehydroquinate dehydratase (148 aa).

Tyrosine 23 functions as the Proton acceptor in the catalytic mechanism. Asparagine 75, histidine 81, and aspartate 88 together coordinate substrate. Catalysis depends on histidine 101, which acts as the Proton donor. Substrate is bound by residues 102 to 103 and arginine 112; that span reads LS.

This sequence belongs to the type-II 3-dehydroquinase family. As to quaternary structure, homododecamer.

It carries out the reaction 3-dehydroquinate = 3-dehydroshikimate + H2O. It participates in metabolic intermediate biosynthesis; chorismate biosynthesis; chorismate from D-erythrose 4-phosphate and phosphoenolpyruvate: step 3/7. Functionally, catalyzes a trans-dehydration via an enolate intermediate. This Cellvibrio japonicus (strain Ueda107) (Pseudomonas fluorescens subsp. cellulosa) protein is 3-dehydroquinate dehydratase.